Reading from the N-terminus, the 622-residue chain is Glucose 1,6-bisphosphate synthase (622 aa).

The alpha-D-glucose 1,6-bisphosphate site is built by Arg73 and Ser175. The active-site Phosphoserine intermediate is the Ser175. Mg(2+) is bound by residues Ser175, Asp332, and Asp334. At Ser175 the chain carries Phosphoserine. Alpha-D-glucose 1,6-bisphosphate is bound by residues Asp336, Arg337, Glu434, Ser436, and Lys448.

Belongs to the phosphohexose mutase family.

The protein localises to the cytoplasm. It is found in the cytosol. It catalyses the reaction (2R)-3-phospho-glyceroyl phosphate + alpha-D-glucose 1-phosphate = alpha-D-glucose 1,6-bisphosphate + (2R)-3-phosphoglycerate + H(+). The catalysed reaction is alpha-D-glucose 6-phosphate + (2R)-3-phospho-glyceroyl phosphate = alpha-D-glucose 1,6-bisphosphate + (2R)-3-phosphoglycerate + H(+). It carries out the reaction (2R)-3-phospho-glyceroyl phosphate + alpha-D-ribose 1-phosphate = alpha-D-ribose 1,5-bisphosphate + (2R)-3-phosphoglycerate + H(+). The enzyme catalyses 2-deoxy-alpha-D-ribose 1-phosphate + (2R)-3-phospho-glyceroyl phosphate = 2-deoxy-alpha-D-ribose 1,5-bisphosphate + (2R)-3-phosphoglycerate + H(+). It catalyses the reaction (2R)-3-phospho-glyceroyl phosphate + alpha-D-mannose 1-phosphate = alpha-D-mannose 1,6-bisphosphate + (2R)-3-phosphoglycerate + H(+). Its function is as follows. Glucose 1,6-bisphosphate synthase using 1,3-bisphosphoglycerate as a phosphate donor and a series of 1-phosphate sugars, including glucose 1-phosphate, mannose 1-phosphate, ribose 1-phosphate and deoxyribose 1-phosphate, as acceptors. In vitro, also exhibits very low phosphopentomutase and phosphoglucomutase activity which are most probably not physiologically relevant. The sequence is that of Glucose 1,6-bisphosphate synthase from Homo sapiens (Human).